Consider the following 210-residue polypeptide: Large ribosomal subunit protein uL4 (210 aa).

The interval 46–96 (QGNASTKTRAEVRGGGRKPWRQKGTGRARAGSNRSPLWRGGGVIFGPKPRD) is disordered. Positions 60-71 (GGRKPWRQKGTG) are enriched in basic residues.

This sequence belongs to the universal ribosomal protein uL4 family. As to quaternary structure, part of the 50S ribosomal subunit.

Its function is as follows. One of the primary rRNA binding proteins, this protein initially binds near the 5'-end of the 23S rRNA. It is important during the early stages of 50S assembly. It makes multiple contacts with different domains of the 23S rRNA in the assembled 50S subunit and ribosome. Forms part of the polypeptide exit tunnel. This chain is Large ribosomal subunit protein uL4, found in Gloeothece citriformis (strain PCC 7424) (Cyanothece sp. (strain PCC 7424)).